The sequence spans 98 residues: Major carboxysome shell protein CsoS1A (98 aa).

The BMC domain occupies alanine 8–proline 93.

It belongs to the bacterial microcompartments protein family. CsoS1 subfamily. Homohexamer with a small central pore; the concave side is mostly positive electrostatic potential, whereas the convex side is mostly negative electrostatic potential. Forms a CsoS2-CsoS1-RuBisCO complex. Interacts with the N-terminus (residues 1-136) of RuBisCO (CbbL).

The protein resides in the carboxysome. In terms of biological role, the major shell protein of the carboxysome, a polyhedral inclusion where RuBisCO (ribulose bisphosphate carboxylase, ccbL-ccbS) is sequestered. Assembles into hexamers which make sheets that form the facets of the polyhedral carboxysome. The shell probably limits the diffusion of CO(2) into and out of the carboxysome. Molecular modeling shows the central pore of this protein is selectively permeable to anions such as HCO(3) rather than CO(2) or O(2). There are estimated to be 2970 CsoS1A/CsoS1C proteins per carboxysome (the proteins differ by only 1 residue). Functionally, unlike beta-carboxysomes, alpha-carboxysomes (Cb) can form without cargo protein. CsoS2 is essential for Cb formation and is also capable of targeting foreign proteins to the Cb. The Cb shell assembles with the aid of CsoS2; CsoS1A, CsoS1B and CsoS1C form the majority of the shell while CsoS4A and CsoS4B form vertices. CsoS1D forms pseudohexamers that probably control metabolite flux into and out of the shell. In Halothiobacillus neapolitanus (strain ATCC 23641 / c2) (Thiobacillus neapolitanus), this protein is Major carboxysome shell protein CsoS1A.